Reading from the N-terminus, the 360-residue chain is Protein Wnt-2 (360 aa).

Positions 1 to 25 (MNAPLGGIWLWLPLLLTWLSPEVSS) are cleaved as a signal peptide. Cystine bridges form between Cys76–Cys87, Cys127–Cys135, Cys137–Cys157, Cys206–Cys220, Cys208–Cys215, Cys278–Cys309, Cys294–Cys304, Cys308–Cys348, Cys324–Cys339, Cys326–Cys336, and Cys331–Cys332. A lipid anchor (O-palmitoleoyl serine; by PORCN) is attached at Ser212. N-linked (GlcNAc...) asparagine glycosylation occurs at Asn295.

It belongs to the Wnt family. Palmitoleoylation is required for efficient binding to frizzled receptors. Depalmitoleoylation leads to Wnt signaling pathway inhibition.

The protein resides in the secreted. It is found in the extracellular space. The protein localises to the extracellular matrix. Functionally, ligand for members of the frizzled family of seven transmembrane receptors. Probable developmental protein. May be a signaling molecule which affects the development of discrete regions of tissues. Is likely to signal over only few cell diameters. This chain is Protein Wnt-2 (WNT2), found in Carollia perspicillata (Seba's short-tailed bat).